Here is an 81-residue protein sequence, read N- to C-terminus: Conotoxin Im016 (81 aa).

The signal sequence occupies residues 1 to 21 (MSTLGMMLLILLLLVPLATFA). A propeptide spanning residues 22–31 (DDGPTMRGHR) is cleaved from the precursor.

Belongs to the conotoxin N superfamily. In terms of processing, contains 5 disulfide bonds. As to expression, expressed by the venom duct.

The protein localises to the secreted. Functionally, probable neurotoxin. The sequence is that of Conotoxin Im016 from Conus imperialis (Imperial cone).